The following is a 147-amino-acid chain: 3-hydroxyacyl-[acyl-carrier-protein] dehydratase FabZ (147 aa).

His48 is an active-site residue.

The protein belongs to the thioester dehydratase family. FabZ subfamily.

Its subcellular location is the cytoplasm. The enzyme catalyses a (3R)-hydroxyacyl-[ACP] = a (2E)-enoyl-[ACP] + H2O. Its function is as follows. Involved in unsaturated fatty acids biosynthesis. Catalyzes the dehydration of short chain beta-hydroxyacyl-ACPs and long chain saturated and unsaturated beta-hydroxyacyl-ACPs. The protein is 3-hydroxyacyl-[acyl-carrier-protein] dehydratase FabZ of Aliarcobacter butzleri (strain RM4018) (Arcobacter butzleri).